We begin with the raw amino-acid sequence, 572 residues long: Urease subunit alpha (572 aa).

A Urease domain is found at Gly136–Phe572. The Ni(2+) site is built by His141, His143, and Lys224. Lys224 carries the N6-carboxylysine modification. His226 serves as a coordination point for substrate. His253 and His279 together coordinate Ni(2+). The active-site Proton donor is His327. Asp367 is a binding site for Ni(2+).

Belongs to the metallo-dependent hydrolases superfamily. Urease alpha subunit family. In terms of assembly, heterotrimer of UreA (gamma), UreB (beta) and UreC (alpha) subunits. Three heterotrimers associate to form the active enzyme. It depends on Ni cation as a cofactor. In terms of processing, carboxylation allows a single lysine to coordinate two nickel ions.

The protein resides in the cytoplasm. It catalyses the reaction urea + 2 H2O + H(+) = hydrogencarbonate + 2 NH4(+). It participates in nitrogen metabolism; urea degradation; CO(2) and NH(3) from urea (urease route): step 1/1. The protein is Urease subunit alpha of Haemophilus influenzae (strain PittGG).